A 211-amino-acid chain; its full sequence is Intermembrane phospholipid transport system binding protein MlaC (211 aa).

A signal peptide spans 1 to 21 (MFKRLMMVALLVIAPLSAATA).

Belongs to the MlaC/ttg2D family. Interacts with the MlaA-OmpF outer membrane complex and with the inner membrane ABC transporter complex MlaFEDB, via direct interaction with MlaD.

The protein resides in the periplasm. Involved in a phospholipid transport pathway that maintains lipid asymmetry in the outer membrane by retrograde trafficking of phospholipids from the outer membrane to the inner membrane. May transfer phospholipid across the periplasmic space and deliver it to the MlaFEDB complex at the inner membrane. This chain is Intermembrane phospholipid transport system binding protein MlaC, found in Escherichia coli (strain K12).